A 339-amino-acid chain; its full sequence is Dihydroorotate dehydrogenase (quinone) (339 aa).

FMN is bound by residues 62–66 and Thr-86; that span reads AGMDK. Lys-66 provides a ligand contact to substrate. Position 111 to 115 (111 to 115) interacts with substrate; it reads NRMGF. Asn-139 and Asn-172 together coordinate FMN. Asn-172 contacts substrate. Ser-175 functions as the Nucleophile in the catalytic mechanism. Residue Asn-177 coordinates substrate. Lys-217 and Thr-245 together coordinate FMN. Residue 246-247 participates in substrate binding; sequence NT. FMN-binding positions include Gly-268, Gly-297, and 318-319; that span reads YS.

This sequence belongs to the dihydroorotate dehydrogenase family. Type 2 subfamily. As to quaternary structure, monomer. It depends on FMN as a cofactor.

It is found in the cell membrane. It catalyses the reaction (S)-dihydroorotate + a quinone = orotate + a quinol. The protein operates within pyrimidine metabolism; UMP biosynthesis via de novo pathway; orotate from (S)-dihydroorotate (quinone route): step 1/1. Its function is as follows. Catalyzes the conversion of dihydroorotate to orotate with quinone as electron acceptor. The polypeptide is Dihydroorotate dehydrogenase (quinone) (Shewanella pealeana (strain ATCC 700345 / ANG-SQ1)).